The following is a 231-amino-acid chain: 5'-methylthioadenosine/S-adenosylhomocysteine nucleosidase (231 aa).

The active-site Proton acceptor is Glu12. Substrate contacts are provided by residues Gly78, Val153, and 174–175 (ME). Catalysis depends on Asp198, which acts as the Proton donor.

Belongs to the PNP/UDP phosphorylase family. MtnN subfamily.

It carries out the reaction S-adenosyl-L-homocysteine + H2O = S-(5-deoxy-D-ribos-5-yl)-L-homocysteine + adenine. It catalyses the reaction S-methyl-5'-thioadenosine + H2O = 5-(methylsulfanyl)-D-ribose + adenine. The catalysed reaction is 5'-deoxyadenosine + H2O = 5-deoxy-D-ribose + adenine. It participates in amino-acid biosynthesis; L-methionine biosynthesis via salvage pathway; S-methyl-5-thio-alpha-D-ribose 1-phosphate from S-methyl-5'-thioadenosine (hydrolase route): step 1/2. Catalyzes the irreversible cleavage of the glycosidic bond in both 5'-methylthioadenosine (MTA) and S-adenosylhomocysteine (SAH/AdoHcy) to adenine and the corresponding thioribose, 5'-methylthioribose and S-ribosylhomocysteine, respectively. Also cleaves 5'-deoxyadenosine, a toxic by-product of radical S-adenosylmethionine (SAM) enzymes, into 5-deoxyribose and adenine. In Vibrio cholerae serotype O1 (strain ATCC 39315 / El Tor Inaba N16961), this protein is 5'-methylthioadenosine/S-adenosylhomocysteine nucleosidase.